We begin with the raw amino-acid sequence, 1005 residues long: DNA polymerase (1005 aa).

The protein belongs to the DNA polymerase type-B family. In terms of assembly, interacts with OPG148. Component of the Uracil-DNA glycosylase(UDG)-OPG148-polymerase complex; OPG148 and OPG116/UDG form a heterodimeric processivity factor that associates with OPG071 to form the processive polymerase holoenzyme.

It carries out the reaction DNA(n) + a 2'-deoxyribonucleoside 5'-triphosphate = DNA(n+1) + diphosphate. In terms of biological role, catalyzes DNA synthesis. Acquires processivity by associating with a heterodimeric processivity factor comprised of the viral OPG148 and OPG116 proteins, thereby forming the DNA polymerase holoenzyme. Displays 3'- to 5' exonuclease activity. Might participate in viral DNA recombination. Does not perform OPG116/D4synthesis across an abasic site. The sequence is that of DNA polymerase (OPG071) from Variola virus (isolate Human/India/Ind3/1967) (VARV).